The sequence spans 404 residues: Demethylphylloquinone reductase NdbB (404 aa).

Residue 7–43 (RICILGGGFGGLYTALRLGQLSWEGHTPPEIVLVDQR) participates in FAD binding. 159 to 195 (IRIAIVGGGYSGVELAAKLGDRLGERGRIRIIERGKE) contributes to the NADP(+) binding site.

It belongs to the NADH dehydrogenase family. FAD serves as cofactor.

It catalyses the reaction demethylphylloquinone + NADPH + H(+) = demethylphylloquinol + NADP(+). It participates in cofactor biosynthesis; phylloquinone biosynthesis. Its activity is regulated as follows. Inhibited by dicumarol. Its function is as follows. Bifunctional oxidoreductase probably ables to act both on prenyl naphthoquinones and on prenyl benzoquinones. Catalyzes the penultimate step in the biosynthesis of vitamin K1. The protein is Demethylphylloquinone reductase NdbB of Synechocystis sp. (strain ATCC 27184 / PCC 6803 / Kazusa).